A 370-amino-acid chain; its full sequence is MTLSRSSRSVDVDGAQPYTITIAPGLLADGARLASHVRGRHALLLSDSQVAPHYAAGVRAALSRARPDLQVGELVIAAGEASKTLETFGSAITALAELGATRDACVFALGGGVVGDLAGFAAACWMRGVDCVQLPTSLLAMVDSSVGGKTAVDIPQGKNLVGAFHPPRAVIADTDTLRTLPARELRAGLAEVIKYGAIRDPLFFQWLHAERRALLDGDAAALAQAIARSCEHKAEIVARDPLEKGERALLNLGHTFGHAIETEQGYGAPGNDNLNHGEAVAVGMVLAARLSAALGMSDVQDTETLRALLHDFDLPTEIPPGLTPQALLARMRLDKKNIAGRLRLVLWRGIGKAEVVPDVEEAAVLEILAG.

NAD(+) contacts are provided by residues 112-116 (GVVGD), 136-137 (TS), Lys149, Lys158, and 176-179 (TLRT). Residues Glu191, His254, and His276 each coordinate Zn(2+).

This sequence belongs to the sugar phosphate cyclases superfamily. Dehydroquinate synthase family. It depends on NAD(+) as a cofactor. Co(2+) serves as cofactor. Zn(2+) is required as a cofactor.

Its subcellular location is the cytoplasm. The catalysed reaction is 7-phospho-2-dehydro-3-deoxy-D-arabino-heptonate = 3-dehydroquinate + phosphate. Its pathway is metabolic intermediate biosynthesis; chorismate biosynthesis; chorismate from D-erythrose 4-phosphate and phosphoenolpyruvate: step 2/7. In terms of biological role, catalyzes the conversion of 3-deoxy-D-arabino-heptulosonate 7-phosphate (DAHP) to dehydroquinate (DHQ). In Xanthomonas axonopodis pv. citri (strain 306), this protein is 3-dehydroquinate synthase.